The chain runs to 481 residues: Ribulose bisphosphate carboxylase large chain (481 aa).

The propeptide occupies 1 to 2 (MS). P3 is subject to N-acetylproline. K14 is modified (N6,N6,N6-trimethyllysine). Positions 123 and 173 each coordinate substrate. K175 (proton acceptor) is an active-site residue. K177 provides a ligand contact to substrate. Positions 201, 203, and 204 each coordinate Mg(2+). K201 carries the post-translational modification N6-carboxylysine. The active-site Proton acceptor is the H294. R295, H327, and S379 together coordinate substrate.

It belongs to the RuBisCO large chain family. Type I subfamily. As to quaternary structure, heterohexadecamer of 8 large chains and 8 small chains; disulfide-linked. The disulfide link is formed within the large subunit homodimers. Requires Mg(2+) as cofactor. In terms of processing, the disulfide bond which can form in the large chain dimeric partners within the hexadecamer appears to be associated with oxidative stress and protein turnover.

It is found in the plastid. It localises to the chloroplast. It carries out the reaction 2 (2R)-3-phosphoglycerate + 2 H(+) = D-ribulose 1,5-bisphosphate + CO2 + H2O. The catalysed reaction is D-ribulose 1,5-bisphosphate + O2 = 2-phosphoglycolate + (2R)-3-phosphoglycerate + 2 H(+). Functionally, ruBisCO catalyzes two reactions: the carboxylation of D-ribulose 1,5-bisphosphate, the primary event in carbon dioxide fixation, as well as the oxidative fragmentation of the pentose substrate in the photorespiration process. Both reactions occur simultaneously and in competition at the same active site. In Coffea arabica (Arabian coffee), this protein is Ribulose bisphosphate carboxylase large chain.